The sequence spans 213 residues: Kynurenine formamidase (213 aa).

Trp18 lines the substrate pocket. 3 residues coordinate Zn(2+): His48, His52, and Asp54. His58 serves as the catalytic Proton donor/acceptor. 2 residues coordinate Zn(2+): His160 and Glu172.

The protein belongs to the Cyclase 1 superfamily. KynB family. Homodimer. Requires Zn(2+) as cofactor.

The catalysed reaction is N-formyl-L-kynurenine + H2O = L-kynurenine + formate + H(+). It participates in amino-acid degradation; L-tryptophan degradation via kynurenine pathway; L-kynurenine from L-tryptophan: step 2/2. In terms of biological role, catalyzes the hydrolysis of N-formyl-L-kynurenine to L-kynurenine, the second step in the kynurenine pathway of tryptophan degradation. In Burkholderia vietnamiensis (strain G4 / LMG 22486) (Burkholderia cepacia (strain R1808)), this protein is Kynurenine formamidase.